The following is a 314-amino-acid chain: Glycerol-3-phosphate dehydrogenase [NAD(P)+] (314 aa).

3 residues coordinate NADPH: Phe11, Arg30, and Lys96. Sn-glycerol 3-phosphate contacts are provided by Lys96, Gly124, and Ser126. Ala128 is an NADPH binding site. Positions 179, 232, 242, 243, and 244 each coordinate sn-glycerol 3-phosphate. Residue Lys179 is the Proton acceptor of the active site. Arg243 is an NADPH binding site. Residue Glu264 participates in NADPH binding.

Belongs to the NAD-dependent glycerol-3-phosphate dehydrogenase family.

The protein localises to the cytoplasm. The enzyme catalyses sn-glycerol 3-phosphate + NAD(+) = dihydroxyacetone phosphate + NADH + H(+). The catalysed reaction is sn-glycerol 3-phosphate + NADP(+) = dihydroxyacetone phosphate + NADPH + H(+). It functions in the pathway membrane lipid metabolism; glycerophospholipid metabolism. In terms of biological role, catalyzes the reduction of the glycolytic intermediate dihydroxyacetone phosphate (DHAP) to sn-glycerol 3-phosphate (G3P), the key precursor for phospholipid synthesis. The sequence is that of Glycerol-3-phosphate dehydrogenase [NAD(P)+] from Paracoccus denitrificans (strain Pd 1222).